The primary structure comprises 275 residues: Large ribosomal subunit protein uL2cz/uL2cy (275 aa).

Disordered stretches follow at residues 1–26 (MAIH…VKSN) and 224–275 (MNPV…RRTK). A compositionally biased stretch (polar residues) spans 7–26 (KTSTPSTRNGTVDSRQVKSN).

This sequence belongs to the universal ribosomal protein uL2 family. As to quaternary structure, part of the 50S ribosomal subunit.

It localises to the plastid. Its subcellular location is the chloroplast. The protein is Large ribosomal subunit protein uL2cz/uL2cy (rpl2-A) of Phaseolus angularis (Azuki bean).